A 237-amino-acid chain; its full sequence is Demethylmenaquinone methyltransferase (237 aa).

S-adenosyl-L-methionine is bound by residues threonine 58, aspartate 79, and asparagine 107 to alanine 108.

It belongs to the class I-like SAM-binding methyltransferase superfamily. MenG/UbiE family.

It carries out the reaction a 2-demethylmenaquinol + S-adenosyl-L-methionine = a menaquinol + S-adenosyl-L-homocysteine + H(+). The protein operates within quinol/quinone metabolism; menaquinone biosynthesis; menaquinol from 1,4-dihydroxy-2-naphthoate: step 2/2. Functionally, methyltransferase required for the conversion of demethylmenaquinol (DMKH2) to menaquinol (MKH2). This is Demethylmenaquinone methyltransferase from Lactiplantibacillus plantarum (strain ATCC BAA-793 / NCIMB 8826 / WCFS1) (Lactobacillus plantarum).